A 140-amino-acid polypeptide reads, in one-letter code: Endoribonuclease YbeY (140 aa).

Zn(2+) is bound by residues His100, His104, and His110.

This sequence belongs to the endoribonuclease YbeY family. The cofactor is Zn(2+).

Its subcellular location is the cytoplasm. Single strand-specific metallo-endoribonuclease involved in late-stage 70S ribosome quality control and in maturation of the 3' terminus of the 16S rRNA. The chain is Endoribonuclease YbeY from Helicobacter pylori (strain Shi470).